The sequence spans 204 residues: Methyl-CpG-binding domain-containing protein 1 (204 aa).

Residues 1–46 (MLPFPAMNLKKSRSENSSVASSGSKIEEQTEKSAEPTTIKVQKKAG) are disordered. A compositionally biased stretch (polar residues) spans 15 to 24 (ENSSVASSGS). Positions 25–34 (KIEEQTEKSA) are enriched in basic and acidic residues. The CW-type zinc finger occupies 49 to 104 (GRSIDVFAVQCEKCMKWRKIDTQDEYEDIRSRVQEDPFFCKTKEGVSCEDVGDLNY). The MBD-associated domain (MAD) signature appears at 58–96 (QCEKCMKWRKIDTQDEYEDIRSRVQEDPFFCKTKEGVSC). Zn(2+) contacts are provided by Cys-59, Cys-62, Cys-88, and Cys-96. One can recognise an MBD domain in the interval 110–180 (WVIDKPGLPR…GDFNFTVPKV (71 aa)).

As to expression, mostly expressed in flowers and buds.

Its subcellular location is the nucleus. Its function is as follows. Probable transcriptional regulator. The chain is Methyl-CpG-binding domain-containing protein 1 (MBD1) from Arabidopsis thaliana (Mouse-ear cress).